Consider the following 159-residue polypeptide: SsrA-binding protein (159 aa).

The disordered stretch occupies residues 131–159; sequence KGKKLHDKRESEKERDWNRQKSRLLKDNG. Residues 137–159 show a composition bias toward basic and acidic residues; sequence DKRESEKERDWNRQKSRLLKDNG.

It belongs to the SmpB family.

The protein localises to the cytoplasm. Required for rescue of stalled ribosomes mediated by trans-translation. Binds to transfer-messenger RNA (tmRNA), required for stable association of tmRNA with ribosomes. tmRNA and SmpB together mimic tRNA shape, replacing the anticodon stem-loop with SmpB. tmRNA is encoded by the ssrA gene; the 2 termini fold to resemble tRNA(Ala) and it encodes a 'tag peptide', a short internal open reading frame. During trans-translation Ala-aminoacylated tmRNA acts like a tRNA, entering the A-site of stalled ribosomes, displacing the stalled mRNA. The ribosome then switches to translate the ORF on the tmRNA; the nascent peptide is terminated with the 'tag peptide' encoded by the tmRNA and targeted for degradation. The ribosome is freed to recommence translation, which seems to be the essential function of trans-translation. The sequence is that of SsrA-binding protein from Rhizobium leguminosarum bv. trifolii (strain WSM2304).